Reading from the N-terminus, the 602-residue chain is Elongation factor 4 (602 aa).

One can recognise a tr-type G domain in the interval 8–189 (KNIRNFSIIA…KIITTIPAPS (182 aa)). Residues 20–25 (DHGKST) and 136–139 (NKID) contribute to the GTP site.

This sequence belongs to the TRAFAC class translation factor GTPase superfamily. Classic translation factor GTPase family. LepA subfamily.

It localises to the cell inner membrane. The catalysed reaction is GTP + H2O = GDP + phosphate + H(+). Functionally, required for accurate and efficient protein synthesis under certain stress conditions. May act as a fidelity factor of the translation reaction, by catalyzing a one-codon backward translocation of tRNAs on improperly translocated ribosomes. Back-translocation proceeds from a post-translocation (POST) complex to a pre-translocation (PRE) complex, thus giving elongation factor G a second chance to translocate the tRNAs correctly. Binds to ribosomes in a GTP-dependent manner. This Helicobacter pylori (strain G27) protein is Elongation factor 4.